Reading from the N-terminus, the 600-residue chain is Chaperone protein DnaK (600 aa).

Threonine 175 carries the phosphothreonine; by autocatalysis modification. The span at 569 to 578 shows a compositional bias: low complexity; it reads SFAQATAQQA. The interval 569 to 600 is disordered; that stretch reads SFAQATAQQANTSESDPKADDSNTIDAEIKQD. The segment covering 583-600 has biased composition (basic and acidic residues); that stretch reads SDPKADDSNTIDAEIKQD.

It belongs to the heat shock protein 70 family.

Functionally, acts as a chaperone. This Mesomycoplasma hyopneumoniae (strain 7448) (Mycoplasma hyopneumoniae) protein is Chaperone protein DnaK.